A 20-amino-acid chain; its full sequence is Alpha-conotoxin-like ts14a (20 aa).

Intrachain disulfides connect C3-C16 and C14-C20.

Expressed by the venom duct.

The protein localises to the secreted. Functionally, alpha-conotoxins act on postsynaptic membranes, they bind to the nicotinic acetylcholine receptors (nAChR) and thus inhibit them. This Conus tessulatus (Tessellate cone) protein is Alpha-conotoxin-like ts14a.